The primary structure comprises 549 residues: Nectin-3 (549 aa).

Residues 1-57 (MARTPGPAPLCPGGGKAQLSSAFPPAAGLLLPAPTPPPLLLLLIPLLLFSRLCGALA) form the signal peptide. The region spanning 58–165 (GSIIVEPHVT…GNAQSSTTVT (108 aa)) is the Ig-like V-type domain. Topologically, residues 58-404 (GSIIVEPHVT…ATLKDDTIGT (347 aa)) are extracellular. N-linked (GlcNAc...) asparagine glycosylation is found at N73, N83, N125, N186, N222, and N331. C78 and C148 are disulfide-bonded. 2 Ig-like C2-type domains span residues 170-258 (PTVS…KDIR) and 269-354 (PEVS…KVIY). Disulfide bonds link C193–C246 and C291–C338. The chain crosses the membrane as a helical span at residues 405–425 (IIASVVGGALFLVLVSILAGV). Residues 426–549 (FCYRRRRTFR…SVISRREWYV (124 aa)) lie on the Cytoplasmic side of the membrane.

This sequence belongs to the nectin family. In terms of assembly, cis- and trans-homodimer. Can form trans-heterodimers with NECTIN1, NECTIN2, PVR, IGSF4B/Necl-1 and with IGSF4. Interaction between NECTIN1 and NECTIN3 on the pre- and postsynaptic sites, respectively, initiates the formation of puncta adherentia junctions between axons and dendrites. Interacts (via Cytoplasmic domain) with AFDN, providing a connection with the actin cytoskeleton. Binds with low affinity to TIGIT. In terms of tissue distribution, ubiquitous with high expression in testes. Localized in spermatids at Sertoli-spermatid junctions. Expressed in ovarian granulosa cells, but only faintly expressed after ovulation.

The protein localises to the cell membrane. Its subcellular location is the postsynaptic cell membrane. It localises to the cell junction. It is found in the adherens junction. Functionally, cell adhesion molecule that promotes cell-cell adhesion through heterophilic trans-interactions with nectins-like or other nectins, such as trans-interaction with NECTIN2 at Sertoli-spermatid junctions. Trans-interaction with PVR induces activation of CDC42 and RAC small G proteins through common signaling molecules such as SRC and RAP1. Induces endocytosis-mediated down-regulation of PVR from the cell surface, resulting in reduction of cell movement and proliferation. Involved in axon guidance by promoting contacts between the commissural axons and the floor plate cells. Also involved in the formation of cell-cell junctions, including adherens junctions and synapses. Promotes formation of checkerboard-like cellular pattern of hair cells and supporting cells in the auditory epithelium via heterophilic interaction with NECTIN1: NECTIN1 is present in the membrane of hair cells and associates with NECTIN3 on supporting cells, thereby mediating heterotypic adhesion between these two cell types. Plays a role in the morphology of the ciliary body. In Mus musculus (Mouse), this protein is Nectin-3.